The chain runs to 232 residues: Sugar fermentation stimulation protein homolog (232 aa).

It belongs to the SfsA family.

This chain is Sugar fermentation stimulation protein homolog, found in Geobacter metallireducens (strain ATCC 53774 / DSM 7210 / GS-15).